The primary structure comprises 103 residues: Acyl carrier protein (103 aa).

The Carrier domain maps to 14-89; it reads NIVSNIVQDI…EFIDFTLQTI (76 aa). Ser-49 bears the O-(pantetheine 4'-phosphoryl)serine mark.

Belongs to the acyl carrier protein (ACP) family. 4'-phosphopantetheine is transferred from CoA to a specific serine of apo-ACP by AcpS. This modification is essential for activity because fatty acids are bound in thioester linkage to the sulfhydryl of the prosthetic group.

It is found in the plastid. Its subcellular location is the cyanelle. It functions in the pathway lipid metabolism; fatty acid biosynthesis. In terms of biological role, carrier of the growing fatty acid chain in fatty acid biosynthesis. In Cyanophora paradoxa, this protein is Acyl carrier protein.